We begin with the raw amino-acid sequence, 615 residues long: Zinc finger protein 653 (615 aa).

Disordered regions lie at residues 1–48, 95–117, 176–236, and 401–432; these read MAER…ARRR, RSGRHGKPWEQVPKKPKRKKRRR, PLSD…SSGL, and EEKEEPVAPELATTVPESAEPEAEADGEELDG. The short motif at 107–118 is the Nuclear localization signal element; it reads PKKPKRKKRRRR. The segment covering 108–117 has biased composition (basic residues); sequence KKPKRKKRRR. Over residues 193–205 the composition is skewed to low complexity; the sequence is AGSSDSSSSGSAS. The span at 226-236 shows a compositional bias: polar residues; that stretch reads TPTSPVGSSGL. The span at 419 to 432 shows a compositional bias: acidic residues; that stretch reads AEPEAEADGEELDG. A Nuclear localization signal motif is present at residues 445 to 451; the sequence is EPEKRRR. 5 C2H2-type zinc fingers span residues 467–492, 498–522, 528–550, 556–578, and 586–609; these read FHCPYEGCSQVYVALSSFQNHVNLVH, KVCPHPGCGKKFYLSNHLRRHMIIH, FTCETCGKSFKRKNHLEVHRRTH, LQCEICGYQCRQRASLNWHMKKH, and FTCDRCGKRFEKLDSVKFHTLKSH.

Belongs to the krueppel C2H2-type zinc-finger protein family. In terms of assembly, interacts with NR5A1. Highly expressed in testis, cerebellum, temporal lobe, hippocampus and the adrenal gland. Moderately expressed in spleen, uterus, thymus, pancreas, kidney, stomach and rectum.

The protein localises to the nucleus. Transcriptional repressor. May repress NR5A1, PPARG, NR1H3, NR4A2, ESR1 and NR3C1 transcriptional activity. The polypeptide is Zinc finger protein 653 (ZNF653) (Homo sapiens (Human)).